The chain runs to 229 residues: Thymidylate kinase (229 aa).

Residue 9-16 participates in ATP binding; the sequence is GPEGSGKS.

This sequence belongs to the thymidylate kinase family.

It carries out the reaction dTMP + ATP = dTDP + ADP. Its function is as follows. Phosphorylation of dTMP to form dTDP in both de novo and salvage pathways of dTTP synthesis. The chain is Thymidylate kinase from Roseiflexus castenholzii (strain DSM 13941 / HLO8).